The following is a 473-amino-acid chain: Hyaluronidase-2 (473 aa).

The N-terminal stretch at 1–20 (MRAGLGPIITLALVLEVAWA) is a signal peptide. Cystine bridges form between Cys47–Cys340 and Cys211–Cys227. Residues Asn74 and Asn103 are each glycosylated (N-linked (GlcNAc...) asparagine). The Proton donor role is filled by Glu135. Asn357 is a glycosylation site (N-linked (GlcNAc...) asparagine). The region spanning 361-439 (ATQYCSWTQC…YLGWGGEQCQ (79 aa)) is the EGF-like domain. 3 disulfides stabilise this stretch: Cys365–Cys376, Cys370–Cys427, and Cys429–Cys438. Asn390 is a glycosylation site (N-linked (GlcNAc...) asparagine). Asn448 carries GPI-anchor amidated asparagine; alternate lipidation. Residue Asn448 is glycosylated (N-linked (GlcNAc...) asparagine; alternate). A propeptide spans 449–473 (ASRAWAGSHLTSLLGLVAVALTWTL) (removed in mature form).

This sequence belongs to the glycosyl hydrolase 56 family. Interacts with MST1R. As to expression, widely expressed, with highest expression levels in kidney, lung and liver (at protein level).

The protein resides in the cell membrane. It carries out the reaction Random hydrolysis of (1-&gt;4)-linkages between N-acetyl-beta-D-glucosamine and D-glucuronate residues in hyaluronate.. Functionally, catalyzes hyaluronan degradation into small fragments that are endocytosed and degraded in lysosomes by HYAL1 and exoglycosidases. Essential for the breakdown of extracellular matrix hyaluronan. The chain is Hyaluronidase-2 (Hyal2) from Mus musculus (Mouse).